Reading from the N-terminus, the 450-residue chain is Glucose-6-phosphate isomerase (450 aa).

Glu290 (proton donor) is an active-site residue. Active-site residues include His311 and Lys425.

This sequence belongs to the GPI family.

The protein localises to the cytoplasm. The enzyme catalyses alpha-D-glucose 6-phosphate = beta-D-fructose 6-phosphate. The protein operates within carbohydrate biosynthesis; gluconeogenesis. It functions in the pathway carbohydrate degradation; glycolysis; D-glyceraldehyde 3-phosphate and glycerone phosphate from D-glucose: step 2/4. In terms of biological role, catalyzes the reversible isomerization of glucose-6-phosphate to fructose-6-phosphate. This Listeria innocua serovar 6a (strain ATCC BAA-680 / CLIP 11262) protein is Glucose-6-phosphate isomerase.